We begin with the raw amino-acid sequence, 433 residues long: MNKGIERSVSVVLGAQWGDEGKGKLVDLLSESSTVVCRCQGGNNAGHTVVAGGKEYFFHLLPSGIINPNVLAIIGNGVVVNLEALFQEINEAVNKGLLDVASRLRISDRCHLVFPLHQEIDRMEEELRGLNLLGTTKKGIGPAYSSKVTRNGLRVCDLIGDWDQFTAKYKELVNYVKRRYPALEINVEESLEQLKTYREMLSGMVCDSVLLINKLTESKQTKILVEGAQSCMLDIDFGTYPHVTSSNCSIGGVCTGLGLSPSRVGSVYGVIKAYTTRVGSGPFPTELLDGIGEYIQKKGNEWGVTTKRMRRIGWLDTVVIRYAHIINDFNALALTKIDVLDGLKEVKIARAYVDPETGNELSSFPADPFILSRVVVIYETLPGWKASTQNCRVYDELPPAAKTFIETVEKLLNIPIRWIGTGASRDSIIIRSV.

Residues 18-24 (GDEGKGK) and 46-48 (GHT) contribute to the GTP site. D19 acts as the Proton acceptor in catalysis. D19 and G46 together coordinate Mg(2+). Residues 19-22 (DEGK), 44-47 (NAGH), T136, R150, Q229, T244, and R308 contribute to the IMP site. The Proton donor role is filled by H47. 304–310 (VTTKRMR) contributes to the substrate binding site. GTP is bound by residues R310, 336-338 (KID), and 420-422 (GTG).

This sequence belongs to the adenylosuccinate synthetase family. As to quaternary structure, homodimer. Requires Mg(2+) as cofactor.

Its subcellular location is the cytoplasm. The catalysed reaction is IMP + L-aspartate + GTP = N(6)-(1,2-dicarboxyethyl)-AMP + GDP + phosphate + 2 H(+). It functions in the pathway purine metabolism; AMP biosynthesis via de novo pathway; AMP from IMP: step 1/2. Its function is as follows. Plays an important role in the de novo pathway and in the salvage pathway of purine nucleotide biosynthesis. Catalyzes the first committed step in the biosynthesis of AMP from IMP. The sequence is that of Adenylosuccinate synthetase from Schistosoma japonicum (Blood fluke).